A 250-amino-acid polypeptide reads, in one-letter code: Small ribosomal subunit protein uS3 (250 aa).

In terms of domain architecture, KH type-2 spans 39–111 (IRQLINNFSK…DINLNILEVK (73 aa)).

Belongs to the universal ribosomal protein uS3 family. As to quaternary structure, part of the 30S ribosomal subunit. Forms a tight complex with proteins S10 and S14.

Its function is as follows. Binds the lower part of the 30S subunit head. Binds mRNA in the 70S ribosome, positioning it for translation. The chain is Small ribosomal subunit protein uS3 from Phytoplasma australiense.